A 116-amino-acid polypeptide reads, in one-letter code: Large ribosomal subunit protein uL18 (116 aa).

This sequence belongs to the universal ribosomal protein uL18 family. Part of the 50S ribosomal subunit; part of the 5S rRNA/L5/L18/L25 subcomplex. Contacts the 5S and 23S rRNAs.

This is one of the proteins that bind and probably mediate the attachment of the 5S RNA into the large ribosomal subunit, where it forms part of the central protuberance. The sequence is that of Large ribosomal subunit protein uL18 from Teredinibacter turnerae (strain ATCC 39867 / T7901).